We begin with the raw amino-acid sequence, 428 residues long: 3-phosphoshikimate 1-carboxyvinyltransferase (428 aa).

Positions 19, 20, and 24 each coordinate 3-phosphoshikimate. Lysine 19 is a binding site for phosphoenolpyruvate. Glycine 91 and arginine 119 together coordinate phosphoenolpyruvate. The 3-phosphoshikimate site is built by serine 164, glutamine 166, aspartate 312, and lysine 339. Residue glutamine 166 coordinates phosphoenolpyruvate. The Proton acceptor role is filled by aspartate 312. The phosphoenolpyruvate site is built by arginine 343 and arginine 386.

It belongs to the EPSP synthase family. As to quaternary structure, monomer.

It localises to the cytoplasm. The enzyme catalyses 3-phosphoshikimate + phosphoenolpyruvate = 5-O-(1-carboxyvinyl)-3-phosphoshikimate + phosphate. It participates in metabolic intermediate biosynthesis; chorismate biosynthesis; chorismate from D-erythrose 4-phosphate and phosphoenolpyruvate: step 6/7. Functionally, catalyzes the transfer of the enolpyruvyl moiety of phosphoenolpyruvate (PEP) to the 5-hydroxyl of shikimate-3-phosphate (S3P) to produce enolpyruvyl shikimate-3-phosphate and inorganic phosphate. This is 3-phosphoshikimate 1-carboxyvinyltransferase from Bacillus subtilis (strain 168).